The primary structure comprises 186 residues: ATP synthase subunit delta (186 aa).

It belongs to the ATPase delta chain family. As to quaternary structure, F-type ATPases have 2 components, F(1) - the catalytic core - and F(0) - the membrane proton channel. F(1) has five subunits: alpha(3), beta(3), gamma(1), delta(1), epsilon(1). F(0) has three main subunits: a(1), b(2) and c(10-14). The alpha and beta chains form an alternating ring which encloses part of the gamma chain. F(1) is attached to F(0) by a central stalk formed by the gamma and epsilon chains, while a peripheral stalk is formed by the delta and b chains.

It is found in the cell inner membrane. Its function is as follows. F(1)F(0) ATP synthase produces ATP from ADP in the presence of a proton or sodium gradient. F-type ATPases consist of two structural domains, F(1) containing the extramembraneous catalytic core and F(0) containing the membrane proton channel, linked together by a central stalk and a peripheral stalk. During catalysis, ATP synthesis in the catalytic domain of F(1) is coupled via a rotary mechanism of the central stalk subunits to proton translocation. Functionally, this protein is part of the stalk that links CF(0) to CF(1). It either transmits conformational changes from CF(0) to CF(1) or is implicated in proton conduction. The polypeptide is ATP synthase subunit delta (Wolbachia sp. subsp. Drosophila simulans (strain wRi)).